Consider the following 153-residue polypeptide: 6,7-dimethyl-8-ribityllumazine synthase (153 aa).

Residues F22, 56 to 58 (AFE), and 80 to 82 (TVI) each bind 5-amino-6-(D-ribitylamino)uracil. 85–86 (ST) provides a ligand contact to (2S)-2-hydroxy-3-oxobutyl phosphate. The Proton donor role is filled by H88. F113 is a binding site for 5-amino-6-(D-ribitylamino)uracil. Position 127 (R127) interacts with (2S)-2-hydroxy-3-oxobutyl phosphate.

Belongs to the DMRL synthase family. As to quaternary structure, forms an icosahedral capsid composed of 60 subunits, arranged as a dodecamer of pentamers.

It catalyses the reaction (2S)-2-hydroxy-3-oxobutyl phosphate + 5-amino-6-(D-ribitylamino)uracil = 6,7-dimethyl-8-(1-D-ribityl)lumazine + phosphate + 2 H2O + H(+). Its pathway is cofactor biosynthesis; riboflavin biosynthesis; riboflavin from 2-hydroxy-3-oxobutyl phosphate and 5-amino-6-(D-ribitylamino)uracil: step 1/2. Catalyzes the formation of 6,7-dimethyl-8-ribityllumazine by condensation of 5-amino-6-(D-ribitylamino)uracil with 3,4-dihydroxy-2-butanone 4-phosphate. This is the penultimate step in the biosynthesis of riboflavin. The sequence is that of 6,7-dimethyl-8-ribityllumazine synthase from Actinobacillus pleuropneumoniae serotype 5b (strain L20).